The primary structure comprises 195 residues: Imidazoleglycerol-phosphate dehydratase (195 aa).

Belongs to the imidazoleglycerol-phosphate dehydratase family.

It localises to the cytoplasm. It catalyses the reaction D-erythro-1-(imidazol-4-yl)glycerol 3-phosphate = 3-(imidazol-4-yl)-2-oxopropyl phosphate + H2O. The protein operates within amino-acid biosynthesis; L-histidine biosynthesis; L-histidine from 5-phospho-alpha-D-ribose 1-diphosphate: step 6/9. The chain is Imidazoleglycerol-phosphate dehydratase from Thermotoga neapolitana (strain ATCC 49049 / DSM 4359 / NBRC 107923 / NS-E).